The chain runs to 114 residues: MPIFTFSTNVPSENISVDFLKSTSKLIAGMLGKPESYVAVHINGGQKITFGGTDAPAGFGQLLSLGGVGGEKNRSHSAKLFKHLTDGLGIPGNRMYINFVDMRGSDVGYNGSTF.

Proline 2 (proton acceptor; via imino nitrogen) is an active-site residue. Residues lysine 33 and asparagine 98 each contribute to the substrate site.

It belongs to the MIF family.

The protein localises to the secreted. It carries out the reaction L-dopachrome = 5,6-dihydroxyindole-2-carboxylate. It catalyses the reaction 3-phenylpyruvate = enol-phenylpyruvate. Its function is as follows. Tautomerization of the methyl ester of L-dopachrome. Inhibits migration of human peripheral blood mononuclear cells. The protein is Macrophage migration inhibitory factor homolog of Trichuris trichiura (Whipworm).